Here is a 234-residue protein sequence, read N- to C-terminus: Inosine triphosphate pyrophosphatase (234 aa).

11–16 is a binding site for ITP; sequence SGNKGK. Glu-40 contributes to the Mg(2+) binding site. ITP is bound by residues Lys-53, 81-82, Lys-98, 176-179, Lys-203, and 208-209; these read DT, FGWD, and HR.

This sequence belongs to the HAM1 NTPase family. In terms of assembly, homodimer. The cofactor is Mg(2+). Mn(2+) serves as cofactor.

It is found in the cytoplasm. It catalyses the reaction ITP + H2O = IMP + diphosphate + H(+). The enzyme catalyses dITP + H2O = dIMP + diphosphate + H(+). It carries out the reaction XTP + H2O = XMP + diphosphate + H(+). Functionally, pyrophosphatase that hydrolyzes non-canonical purine nucleotides such as inosine triphosphate (ITP), deoxyinosine triphosphate (dITP) or xanthosine 5'-triphosphate (XTP) to their respective monophosphate derivatives. The enzyme does not distinguish between the deoxy- and ribose forms. Probably excludes non-canonical purines from RNA and DNA precursor pools, thus preventing their incorporation into RNA and DNA and avoiding chromosomal lesions. In Leishmania major, this protein is Inosine triphosphate pyrophosphatase.